Consider the following 211-residue polypeptide: Scoloptoxin SSD43 (211 aa).

An N-terminal signal peptide occupies residues 1–20 (MNFVIYGVIVVLTSQLYVDG).

Contains 3 disulfide bonds. As to expression, expressed by the venom gland.

It localises to the secreted. Functionally, shows trypsin inhibiting activity. The protein is highly thermally stable, since its incubation in boiling water during 10 minutes does not reduce its activity. The protein is Scoloptoxin SSD43 of Scolopendra dehaani (Thai centipede).